A 373-amino-acid chain; its full sequence is Trifolitoxin-processing protein TfxB (373 aa).

This sequence to E.coli McbC which is involved in the processing of microcin B17 (MCCB17).

The protein resides in the cytoplasm. Its function is as follows. The actions of the proteins TfxB, TfxD and TfxF are implicated in the processing of the inactive trifolitoxin (TfxA) precursor into the active peptide. This Rhizobium leguminosarum bv. trifolii protein is Trifolitoxin-processing protein TfxB (tfxB).